The primary structure comprises 445 residues: Tubulin beta-7 chain (445 aa).

8 residues coordinate GTP: Gln-11, Glu-69, Ser-138, Gly-142, Thr-143, Gly-144, Asn-204, and Asn-226. Glu-69 contributes to the Mg(2+) binding site. Residues Glu-421 to Thr-445 form a disordered region. Over residues Thr-429–Thr-445 the composition is skewed to acidic residues.

It belongs to the tubulin family. Dimer of alpha and beta chains. A typical microtubule is a hollow water-filled tube with an outer diameter of 25 nm and an inner diameter of 15 nM. Alpha-beta heterodimers associate head-to-tail to form protofilaments running lengthwise along the microtubule wall with the beta-tubulin subunit facing the microtubule plus end conferring a structural polarity. Microtubules usually have 13 protofilaments but different protofilament numbers can be found in some organisms and specialized cells. Requires Mg(2+) as cofactor.

It is found in the cytoplasm. The protein resides in the cytoskeleton. Its function is as follows. Tubulin is the major constituent of microtubules, a cylinder consisting of laterally associated linear protofilaments composed of alpha- and beta-tubulin heterodimers. Microtubules grow by the addition of GTP-tubulin dimers to the microtubule end, where a stabilizing cap forms. Below the cap, tubulin dimers are in GDP-bound state, owing to GTPase activity of alpha-tubulin. This Zea mays (Maize) protein is Tubulin beta-7 chain (TUBB7).